Reading from the N-terminus, the 222-residue chain is Ubiquitin-conjugating enzyme E2 S (222 aa).

An N-acetylmethionine modification is found at Met1. A UBC core domain is found at 11 to 157 (HIIRLVYKEV…ARLLTEIHGG (147 aa)). Cys95 functions as the Glycyl thioester intermediate in the catalytic mechanism. The disordered stretch occupies residues 156-222 (GGAGGPSGRA…TDKKRALRRL (67 aa)). Position 173 is a phosphoserine (Ser173). Residues 208 to 222 (AAKKKTDKKRALRRL) are compositionally biased toward basic residues.

Belongs to the ubiquitin-conjugating enzyme family. Component of the APC/C complex, composed of at least 14 distinct subunits that assemble into a complex of at least 19 chains with a combined molecular mass of around 1.2 MDa. Within this complex, directly interacts with ANAPC2 and ANAPC4. Interacts with CDC20, FZR1/CDH1 and VHL. Autoubiquitinated by the APC/C complex during G1, leading to its degradation by the proteasome.

It carries out the reaction S-ubiquitinyl-[E1 ubiquitin-activating enzyme]-L-cysteine + [E2 ubiquitin-conjugating enzyme]-L-cysteine = [E1 ubiquitin-activating enzyme]-L-cysteine + S-ubiquitinyl-[E2 ubiquitin-conjugating enzyme]-L-cysteine.. It functions in the pathway protein modification; protein ubiquitination. Functionally, accepts ubiquitin from the E1 complex and catalyzes its covalent attachment to other proteins. Catalyzes 'Lys-11'-linked polyubiquitination. Acts as an essential factor of the anaphase promoting complex/cyclosome (APC/C), a cell cycle-regulated ubiquitin ligase that controls progression through mitosis. Acts by specifically elongating 'Lys-11'-linked polyubiquitin chains initiated by the E2 enzyme UBE2C/UBCH10 on APC/C substrates, enhancing the degradation of APC/C substrates by the proteasome and promoting mitotic exit. Also acts by elongating ubiquitin chains initiated by the E2 enzyme UBE2D1/UBCH5 in vitro; it is however unclear whether UBE2D1/UBCH5 acts as an E2 enzyme for the APC/C in vivo. Also involved in ubiquitination and subsequent degradation of VHL, resulting in an accumulation of HIF1A. In vitro able to promote polyubiquitination using all 7 ubiquitin Lys residues, except 'Lys-48'-linked polyubiquitination. The protein is Ubiquitin-conjugating enzyme E2 S (UBE2S) of Homo sapiens (Human).